Here is a 351-residue protein sequence, read N- to C-terminus: Peroxisomal membrane protein PEX14 (351 aa).

Positions Lys-54–Pro-75 are disordered. Positions Val-60–Val-70 are enriched in low complexity. Residues Ala-83–Trp-91 carry the SH3-binding motif. The disordered stretch occupies residues Ala-243–Ala-351. The span at Gln-245–Ser-258 shows a compositional bias: polar residues. Residues Val-283–Asn-293 are compositionally biased toward basic and acidic residues. Residues Ser-294–Arg-303 are compositionally biased toward polar residues. Over residues Ser-320–Gly-334 the composition is skewed to low complexity.

Belongs to the peroxin-14 family. As to quaternary structure, interacts with PEX13 (via SH3 domain); forming the PEX13-PEX14 docking complex. Interacts with PEX5 (via WxxxF/Y motifs).

The protein localises to the peroxisome membrane. Component of the PEX13-PEX14 docking complex, a translocon channel that specifically mediates the import of peroxisomal cargo proteins bound to PEX5 receptor. The PEX13-PEX14 docking complex forms a large import pore which can be opened to a diameter of about 9 nm. Mechanistically, PEX5 receptor along with cargo proteins associates with the PEX14 subunit of the PEX13-PEX14 docking complex in the cytosol, leading to the insertion of the receptor into the organelle membrane with the concomitant translocation of the cargo into the peroxisome matrix. The sequence is that of Peroxisomal membrane protein PEX14 from Pichia angusta (Yeast).